The primary structure comprises 589 residues: Arginine--tRNA ligase (589 aa).

Residues 131-141 (ANPTGPLHVGH) carry the 'HIGH' region motif.

This sequence belongs to the class-I aminoacyl-tRNA synthetase family. In terms of assembly, monomer.

It localises to the cytoplasm. The enzyme catalyses tRNA(Arg) + L-arginine + ATP = L-arginyl-tRNA(Arg) + AMP + diphosphate. In Legionella pneumophila (strain Paris), this protein is Arginine--tRNA ligase.